An 83-amino-acid polypeptide reads, in one-letter code: Small ribosomal subunit protein bS20 (83 aa).

Residues 1-11 show a composition bias toward basic residues; that stretch reads MANHKSAAKRA. Residues 1–44 are disordered; it reads MANHKSAAKRAKQSEARRLRNKSTRSSMNTAVKKVRTAKEAGTD.

It belongs to the bacterial ribosomal protein bS20 family.

In terms of biological role, binds directly to 16S ribosomal RNA. The chain is Small ribosomal subunit protein bS20 from Desulforapulum autotrophicum (strain ATCC 43914 / DSM 3382 / VKM B-1955 / HRM2) (Desulfobacterium autotrophicum).